A 154-amino-acid polypeptide reads, in one-letter code: Deoxyuridine 5'-triphosphate nucleotidohydrolase (154 aa).

Substrate contacts are provided by residues R72 to G74, N85, L89 to D91, and M99.

The protein belongs to the dUTPase family. It depends on Mg(2+) as a cofactor.

The catalysed reaction is dUTP + H2O = dUMP + diphosphate + H(+). It functions in the pathway pyrimidine metabolism; dUMP biosynthesis; dUMP from dCTP (dUTP route): step 2/2. Its function is as follows. This enzyme is involved in nucleotide metabolism: it produces dUMP, the immediate precursor of thymidine nucleotides and it decreases the intracellular concentration of dUTP so that uracil cannot be incorporated into DNA. This is Deoxyuridine 5'-triphosphate nucleotidohydrolase from Psychrobacter arcticus (strain DSM 17307 / VKM B-2377 / 273-4).